We begin with the raw amino-acid sequence, 416 residues long: L-threonine dehydratase biosynthetic IlvA (416 aa).

Lysine 51 is subject to N6-(pyridoxal phosphate)lysine. Pyridoxal 5'-phosphate is bound by residues asparagine 78, 184–188, and serine 309; that span reads GGGGL. The 75-residue stretch at 333–407 folds into the ACT-like domain; that stretch reads HYFVINFPQR…FDNRYVNLHG (75 aa).

The protein belongs to the serine/threonine dehydratase family. As to quaternary structure, homotetramer. Requires pyridoxal 5'-phosphate as cofactor.

The catalysed reaction is L-threonine = 2-oxobutanoate + NH4(+). The protein operates within amino-acid biosynthesis; L-isoleucine biosynthesis; 2-oxobutanoate from L-threonine: step 1/1. In terms of biological role, catalyzes the anaerobic formation of alpha-ketobutyrate and ammonia from threonine in a two-step reaction. The first step involved a dehydration of threonine and a production of enamine intermediates (aminocrotonate), which tautomerizes to its imine form (iminobutyrate). Both intermediates are unstable and short-lived. The second step is the nonenzymatic hydrolysis of the enamine/imine intermediates to form 2-ketobutyrate and free ammonia. In the low water environment of the cell, the second step is accelerated by RidA. This is L-threonine dehydratase biosynthetic IlvA (ilvA) from Lactococcus lactis subsp. lactis (strain IL1403) (Streptococcus lactis).